The primary structure comprises 431 residues: MANVVVVGAQWGDEGKGKIVDWLSIEADIVVRFQGGHNAGHTLVIGNQVYKLALLPSGIVRPGKLSVIGNGVVLDPHHLVDEIAKISAQGVTVTPDNLKIADNVTLILALHRELDAHRESASVAGVKIGTTKRGIGPAYEDKVGRRAIRLMDLAEPDSLDEKIDRLLAHHDPLRRGLGLEPVPRAAIRAELEDVAPKVLPYMDAVWDLLETARRDGKRILFEGAQGALLDVDHGTYPFVTSSNTVAANAATGSGLGPKAIGYVLGIAKAYTTRVGGGPFPTELHDETGQRLGDRGHEFGTNTGRRRRCGWFDAVLVRQTVKTSGIDGIALTKLDILDGFEEIKVCVGYLLDGERINRFPASQAAQARVTPIYETMEGWAGTTAGARSWAELPAQAIKYVRRIEELIEAPVALLSTSPQRADTILVHNPFRD.

GTP is bound by residues 12–18 (GDEGKGK) and 40–42 (GHT). Asp13 functions as the Proton acceptor in the catalytic mechanism. Asp13 and Gly40 together coordinate Mg(2+). Residues 13–16 (DEGK), 38–41 (NAGH), Thr131, Arg145, Gln225, Thr240, and Arg304 each bind IMP. Catalysis depends on His41, which acts as the Proton donor. 300–306 (TNTGRRR) provides a ligand contact to substrate. Residues Arg306, 332 to 334 (KLD), and 414 to 416 (STS) each bind GTP.

This sequence belongs to the adenylosuccinate synthetase family. As to quaternary structure, homodimer. It depends on Mg(2+) as a cofactor.

Its subcellular location is the cytoplasm. The catalysed reaction is IMP + L-aspartate + GTP = N(6)-(1,2-dicarboxyethyl)-AMP + GDP + phosphate + 2 H(+). It functions in the pathway purine metabolism; AMP biosynthesis via de novo pathway; AMP from IMP: step 1/2. Functionally, plays an important role in the de novo pathway of purine nucleotide biosynthesis. Catalyzes the first committed step in the biosynthesis of AMP from IMP. This is Adenylosuccinate synthetase from Methylocella silvestris (strain DSM 15510 / CIP 108128 / LMG 27833 / NCIMB 13906 / BL2).